A 386-amino-acid polypeptide reads, in one-letter code: GTPase Obg (386 aa).

The Obg domain occupies 4-162; sequence SNFVDYVKIY…RTVILQLKLL (159 aa). Positions 18–44 are disordered; it reads KGGRGSSHFRREKYIPKGGPDGGDGGR. The OBG-type G domain maps to 163–329; sequence ADVGLVGFPN…LKDLLWKELN (167 aa). GTP contacts are provided by residues 169–176, 194–198, 216–219, 283–286, and 310–312; these read GFPNAGKS, FTTLE, DIPG, TKSD, and SSI. Positions 176 and 196 each coordinate Mg(2+). The segment at 357–386 is disordered; that stretch reads YIFPVDEDEDDPDEEYEEYWDDDEDEDTRK.

It belongs to the TRAFAC class OBG-HflX-like GTPase superfamily. OBG GTPase family. As to quaternary structure, monomer. It depends on Mg(2+) as a cofactor.

It localises to the cytoplasm. An essential GTPase which binds GTP, GDP and possibly (p)ppGpp with moderate affinity, with high nucleotide exchange rates and a fairly low GTP hydrolysis rate. Plays a role in control of the cell cycle, stress response, ribosome biogenesis and in those bacteria that undergo differentiation, in morphogenesis control. The polypeptide is GTPase Obg (Parabacteroides distasonis (strain ATCC 8503 / DSM 20701 / CIP 104284 / JCM 5825 / NCTC 11152)).